Reading from the N-terminus, the 779-residue chain is Endonuclease MutS2 (779 aa).

328 to 335 (GPNTGGKT) contacts ATP. In terms of domain architecture, Smr spans 704–779 (LDLRGKRYEE…GSGATIVTLG (76 aa)).

It belongs to the DNA mismatch repair MutS family. MutS2 subfamily. Homodimer. Binds to stalled ribosomes, contacting rRNA.

Functionally, endonuclease that is involved in the suppression of homologous recombination and thus may have a key role in the control of bacterial genetic diversity. Acts as a ribosome collision sensor, splitting the ribosome into its 2 subunits. Detects stalled/collided 70S ribosomes which it binds and splits by an ATP-hydrolysis driven conformational change. Acts upstream of the ribosome quality control system (RQC), a ribosome-associated complex that mediates the extraction of incompletely synthesized nascent chains from stalled ribosomes and their subsequent degradation. Probably generates substrates for RQC. The chain is Endonuclease MutS2 from Streptococcus pyogenes serotype M1.